A 658-amino-acid polypeptide reads, in one-letter code: Probable methyl-accepting chemotaxis protein BT9727_0469 (658 aa).

Topologically, residues 1–14 are cytoplasmic; the sequence is MLQGKLRRSSLKAK. Residues 15–35 form a helical membrane-spanning segment; it reads LLVSFVIVLILPSIVIGWTSY. Residues 36–283 lie on the Extracellular side of the membrane; that stretch reads QQAKTNFNET…ANPIFYKTLT (248 aa). Residues 44–109 adopt a coiled-coil conformation; sequence ETILQSAEDN…NKLHPEIEAI (66 aa). Residues 150 to 221 form the Cache domain; sequence ITAPYKSSTT…AHPTMKPGDK (72 aa). A helical transmembrane segment spans residues 284–304; that stretch reads VIGISLIIGGVLIYFIIASII. The region spanning 301 to 353 is the HAMP domain; the sequence is ASIISPLKQLVISSKKISEGDLTETITVHSKDEIGQLGESFNEMAASLHHVIS. The Cytoplasmic segment spans residues 305–658; the sequence is SPLKQLVISS…LQEMIGKFKV (354 aa). A Glutamate methyl ester (Glu) modification is found at glutamate 368. One can recognise a Methyl-accepting transducer domain in the interval 372–622; the sequence is SMKQTSEATE…ENAASVQNIA (251 aa). Glutamine 592 is subject to Deamidated glutamine. Position 592 is a glutamate methyl ester (Gln) (glutamine 592). 2 positions are modified to glutamate methyl ester (Glu): glutamate 627 and glutamate 634.

This sequence belongs to the methyl-accepting chemotaxis (MCP) protein family.

The protein localises to the cell membrane. Chemotactic-signal transducers respond to changes in the concentration of attractants and repellents in the environment, transduce a signal from the outside to the inside of the cell, and facilitate sensory adaptation through the variation of the level of methylation. The polypeptide is Probable methyl-accepting chemotaxis protein BT9727_0469 (Bacillus thuringiensis subsp. konkukian (strain 97-27)).